A 638-amino-acid polypeptide reads, in one-letter code: DNA gyrase subunit B (638 aa).

Residues 422-536 (SELYIVEGDS…NGYVYIAQPP (115 aa)) enclose the Toprim domain. Glutamate 428, aspartate 501, and aspartate 503 together coordinate Mg(2+).

The protein belongs to the type II topoisomerase GyrB family. As to quaternary structure, heterotetramer, composed of two GyrA and two GyrB chains. In the heterotetramer, GyrA contains the active site tyrosine that forms a transient covalent intermediate with DNA, while GyrB binds cofactors and catalyzes ATP hydrolysis. Mg(2+) is required as a cofactor. Mn(2+) serves as cofactor. The cofactor is Ca(2+).

It localises to the cytoplasm. It catalyses the reaction ATP-dependent breakage, passage and rejoining of double-stranded DNA.. Its function is as follows. A type II topoisomerase that negatively supercoils closed circular double-stranded (ds) DNA in an ATP-dependent manner to modulate DNA topology and maintain chromosomes in an underwound state. Negative supercoiling favors strand separation, and DNA replication, transcription, recombination and repair, all of which involve strand separation. Also able to catalyze the interconversion of other topological isomers of dsDNA rings, including catenanes and knotted rings. Type II topoisomerases break and join 2 DNA strands simultaneously in an ATP-dependent manner. This Bacillus subtilis (strain 168) protein is DNA gyrase subunit B.